The sequence spans 329 residues: Glycerol-3-phosphate dehydrogenase [NAD(P)+] (329 aa).

NADPH is bound by residues W11 and K101. K101, G132, and S134 together coordinate sn-glycerol 3-phosphate. Position 136 (A136) interacts with NADPH. The sn-glycerol 3-phosphate site is built by K188, D241, S251, R252, and N253. K188 functions as the Proton acceptor in the catalytic mechanism. An NADPH-binding site is contributed by R252. E278 serves as a coordination point for NADPH.

It belongs to the NAD-dependent glycerol-3-phosphate dehydrogenase family.

It localises to the cytoplasm. The enzyme catalyses sn-glycerol 3-phosphate + NAD(+) = dihydroxyacetone phosphate + NADH + H(+). The catalysed reaction is sn-glycerol 3-phosphate + NADP(+) = dihydroxyacetone phosphate + NADPH + H(+). The protein operates within membrane lipid metabolism; glycerophospholipid metabolism. Catalyzes the reduction of the glycolytic intermediate dihydroxyacetone phosphate (DHAP) to sn-glycerol 3-phosphate (G3P), the key precursor for phospholipid synthesis. The chain is Glycerol-3-phosphate dehydrogenase [NAD(P)+] from Onion yellows phytoplasma (strain OY-M).